We begin with the raw amino-acid sequence, 473 residues long: Sphingosine kinase 1 (473 aa).

The DAGKc domain occupies 83–233 (QCRGNLLVFI…VALYSVKTDN (151 aa)). ATP is bound by residues 93-95 (NPN) and 125-129 (TTGPN). 151 to 154 (SGDG) contacts substrate. Asp153 (proton donor/acceptor) is an active-site residue. ATP contacts are provided by residues Glu158 and 184 to 186 (GSG). Residue Asp251 participates in substrate binding. ATP contacts are provided by residues Arg258, Arg265, and 448-450 (DGE).

It depends on Mg(2+) as a cofactor. As to expression, expressed in the majority of cholinergic and GABAergic neurons, body wall muscle, excretory canal cells, intestine, and hypodermis.

It localises to the presynaptic cell membrane. The protein resides in the cell projection. The protein localises to the axon. It is found in the perikaryon. Its subcellular location is the mitochondrion membrane. It carries out the reaction a sphingoid base + ATP = a sphingoid 1-phosphate + ADP + H(+). The catalysed reaction is 15-methylhexadecasphing-4-enine + ATP = 15-methylhexadecasphing-4-enine 1-phosphate + ADP + H(+). It catalyses the reaction 15-methylhexadecasphinganine + ATP = 15-methylhexadecasphinganine 1-phosphate + ADP + H(+). It participates in lipid metabolism; sphingolipid metabolism. Functionally, catalyzes the phosphorylation of sphingoid bases to form sphingoid 1-phosphate (SPP), which have both intra- and extracellular functions. C.elegans contain specific sphingoid bases, which are unique or different in structure compared to the sphingoid bases found in other animals. Two examples of these distinctive compounds are: 15-methylhexadecasphinganine and 15-methylhexadecasphing-4-enine. Required for neurotransmitter release from neuromuscular junctions. Acts by recruiting the synaptic vesicle priming protein unc-13 to synapses. The protein is Sphingosine kinase 1 (sphk-1) of Caenorhabditis elegans.